The sequence spans 47 residues: Large ribosomal subunit protein eL40 (47 aa).

It belongs to the eukaryotic ribosomal protein eL40 family.

The protein is Large ribosomal subunit protein eL40 of Methanococcus aeolicus (strain ATCC BAA-1280 / DSM 17508 / OCM 812 / Nankai-3).